Here is a 270-residue protein sequence, read N- to C-terminus: Putative pyruvate, phosphate dikinase regulatory protein (270 aa).

148–155 (GVSRTSKT) serves as a coordination point for ADP.

Belongs to the pyruvate, phosphate/water dikinase regulatory protein family. PDRP subfamily.

It catalyses the reaction N(tele)-phospho-L-histidyl/L-threonyl-[pyruvate, phosphate dikinase] + ADP = N(tele)-phospho-L-histidyl/O-phospho-L-threonyl-[pyruvate, phosphate dikinase] + AMP + H(+). It carries out the reaction N(tele)-phospho-L-histidyl/O-phospho-L-threonyl-[pyruvate, phosphate dikinase] + phosphate + H(+) = N(tele)-phospho-L-histidyl/L-threonyl-[pyruvate, phosphate dikinase] + diphosphate. In terms of biological role, bifunctional serine/threonine kinase and phosphorylase involved in the regulation of the pyruvate, phosphate dikinase (PPDK) by catalyzing its phosphorylation/dephosphorylation. In Bacillus cereus (strain B4264), this protein is Putative pyruvate, phosphate dikinase regulatory protein.